The chain runs to 319 residues: DNA-directed RNA polymerases IV and V subunit 3B (319 aa).

Position 1 is an N-acetylmethionine (Met-1).

The protein belongs to the archaeal Rpo3/eukaryotic RPB3 RNA polymerase subunit family. In terms of assembly, component of the RNA polymerase IV and V complexes. Interacts with NRPB11, SHH1, GRP23 and NRPD1.

The protein resides in the nucleus. In terms of biological role, DNA-dependent RNA polymerase catalyzes the transcription of DNA into RNA using the four ribonucleoside triphosphates as substrates. Component of RNA polymerases IV and V which mediate short-interfering RNAs (siRNA) accumulation and subsequent RNA-directed DNA methylation-dependent (RdDM) transcriptional gene silencing (TGS) of endogenous repeated sequences, including transposable elements. The chain is DNA-directed RNA polymerases IV and V subunit 3B (NRPD3B) from Arabidopsis thaliana (Mouse-ear cress).